The following is a 1058-amino-acid chain: Isoleucine--tRNA ligase (1058 aa).

The 'HIGH' region signature appears at 48–58; the sequence is PYTTGHIHLGT. Residues 596–600 carry the 'KMSKS' region motif; sequence KMSKS. K599 lines the ATP pocket.

It belongs to the class-I aminoacyl-tRNA synthetase family. IleS type 2 subfamily. As to quaternary structure, monomer. Requires Zn(2+) as cofactor.

The protein resides in the cytoplasm. It carries out the reaction tRNA(Ile) + L-isoleucine + ATP = L-isoleucyl-tRNA(Ile) + AMP + diphosphate. Its function is as follows. Catalyzes the attachment of isoleucine to tRNA(Ile). As IleRS can inadvertently accommodate and process structurally similar amino acids such as valine, to avoid such errors it has two additional distinct tRNA(Ile)-dependent editing activities. One activity is designated as 'pretransfer' editing and involves the hydrolysis of activated Val-AMP. The other activity is designated 'posttransfer' editing and involves deacylation of mischarged Val-tRNA(Ile). This chain is Isoleucine--tRNA ligase, found in Methanosarcina acetivorans (strain ATCC 35395 / DSM 2834 / JCM 12185 / C2A).